The sequence spans 1067 residues: Probable importin-5 homolog (1067 aa).

HEAT repeat units lie at residues 3-34 (LQPITDLLKALNSGNTTTIQQAEQLYADYKNH), 42-75 (SFIVLIRTSQDELLRSYPPVLLRTLVNGNDSGNI), 93-120 (FAVREEPKNHIRHSILNVIAILAIQLVP), 125-152 (PEILSFIIESSSSPEENLRESSFYLIGA), 164-197 (APHFDKFALLVEKGLNDPSAKVQVSALETVSTFI), 206-243 (VFKPLIPAMLNTIQKTIESNLEKEAQKGILTFIIIAQY), 251-286 (NFDMIFKVFFQFLEHQSLEDETKHACLHFFLTFAEF), 295-347 (LYLE…HCVS), 349-381 (GLWEFFLQCAPTLLNSGNWKERYTGLMTLSSIS), 385-425 (EKQI…ASYL), 427-466 (REMQDLYKTLIPVSLEHLNDPFPRVTISNCEFLTLFLDEI), 468-508 (PNRV…VDGI), 510-553 (EEFT…GLAV), 555-596 (KKVF…AQCL), 598-658 (EDFI…AMEL), 661-703 (HLFP…SKQH), 718-757 (FTSRLFLDSYERMAASIKTESEPDTLSAKLKALSDLMDIG), 763-826 (ADRI…CIQF), 832-869 (PYIATVLPAMIELIETAPSVEIKTSMICILDDLIENGG), 876-909 (YPHIIKPMMNCTLPNLDPSLIQSAVFGIGLAAEN), 917-960 (FLME…ITNL), 969-999 (PQTIALWLSYLPIQDDGEAGSIIKSLCTLIR), 1008-1040 (QQYIVKVLEIIAVGLHKKAVNPDDKQIISLALR), and 1041-1064 (SQESLVAQSLFQLSAENQAILANF).

The protein belongs to the importin beta family. Importin beta-3 subfamily.

The protein localises to the cytoplasm. Its subcellular location is the nucleus. Functionally, functions in nuclear protein import as nuclear transport receptor. Serves as receptor for nuclear localization signals (NLS) in cargo substrates. The chain is Probable importin-5 homolog from Dictyostelium discoideum (Social amoeba).